The following is a 109-amino-acid chain: U-scoloptoxin(16)-Cw1a (109 aa).

An N-terminal signal peptide occupies residues 1–21 (MNAVFIVFLSAILSYPHESFA).

Belongs to the scoloptoxin-16 family. In terms of processing, contains 4 disulfide bonds. As to expression, expressed by the venom gland.

The protein localises to the secreted. The polypeptide is U-scoloptoxin(16)-Cw1a (Cormocephalus westwoodi (Westwood's green centipede)).